We begin with the raw amino-acid sequence, 428 residues long: UPF0597 protein PBPRB0240 (428 aa).

It belongs to the UPF0597 family.

The protein is UPF0597 protein PBPRB0240 of Photobacterium profundum (strain SS9).